Consider the following 184-residue polypeptide: ATP-dependent protease subunit HslV (184 aa).

The active site involves Thr11. Ala165, Cys168, and Thr171 together coordinate Na(+).

Belongs to the peptidase T1B family. HslV subfamily. In terms of assembly, a double ring-shaped homohexamer of HslV is capped on each side by a ring-shaped HslU homohexamer. The assembly of the HslU/HslV complex is dependent on binding of ATP.

Its subcellular location is the cytoplasm. The catalysed reaction is ATP-dependent cleavage of peptide bonds with broad specificity.. With respect to regulation, allosterically activated by HslU binding. Its function is as follows. Protease subunit of a proteasome-like degradation complex believed to be a general protein degrading machinery. The sequence is that of ATP-dependent protease subunit HslV from Zymomonas mobilis subsp. mobilis (strain ATCC 31821 / ZM4 / CP4).